Consider the following 344-residue polypeptide: Interactor of constitutive active ROPs 1 (344 aa).

4 disordered regions span residues 1–74 (MPRP…ESQL), 92–139 (EAVK…KETD), 186–218 (HESL…DEMV), and 307–344 (FMDP…KGQK). A compositionally biased stretch (low complexity) spans 19 to 29 (SSSSTSDSNHS). Residues 60-108 (QKKLGGRISDLESQLGQAQEELRLLKEQLANAEAVKKQAQDELHKKSKK) adopt a coiled-coil conformation. 3 stretches are compositionally biased toward basic and acidic residues: residues 93–103 (AVKKQAQDELH), 114–139 (RVEE…KETD), and 186–195 (HESLGKENES). Positions 145–273 (VEKIAVEEEE…EQWRKAADAA (129 aa)) form a coiled coil. The segment covering 196–211 (LKNQLSDSASEISNVK) has biased composition (polar residues).

Belongs to the ICR family. Homooligomer. Interacts with ARAC3, ARAC4, ARAC8, ARAC11 and SEC3A, but not with ICR2 or EXO70A1. In terms of tissue distribution, expressed in mature and germinating pollen. Expressed throughout the embryo but not in the hypophysis and quiescent center (QC). In roots, absent from the QC and the stem cells.

The protein resides in the cell membrane. It is found in the nucleus. In terms of biological role, acts as a scaffold, mediating interaction of ROPs with different proteins. Required for primary and adventitious root maintenance, but not for their formation. Promotes the stabilization of ARAC11 on the plasma membrane of the pollen tube initiation site but not the activation of ARAC11. Regulates directionality of polar auxin transport, and is required for the formation of a stable auxin maximum and tip localized auxin gradient during embryogenesis, organogenesis, and meristem activity. Involved in exocytosis and in the recycling of PIN proteins back to the plasma membrane. In Arabidopsis thaliana (Mouse-ear cress), this protein is Interactor of constitutive active ROPs 1 (ICR1).